The primary structure comprises 466 residues: Soluble pyridine nucleotide transhydrogenase (466 aa).

FAD is bound at residue 36 to 45 (ERYQNVGGGC).

Belongs to the class-I pyridine nucleotide-disulfide oxidoreductase family. The cofactor is FAD.

The protein localises to the cytoplasm. The catalysed reaction is NAD(+) + NADPH = NADH + NADP(+). In terms of biological role, conversion of NADPH, generated by peripheral catabolic pathways, to NADH, which can enter the respiratory chain for energy generation. This chain is Soluble pyridine nucleotide transhydrogenase, found in Escherichia coli O6:K15:H31 (strain 536 / UPEC).